Here is a 201-residue protein sequence, read N- to C-terminus: Large ribosomal subunit protein bL25 (201 aa).

This sequence belongs to the bacterial ribosomal protein bL25 family. CTC subfamily. In terms of assembly, part of the 50S ribosomal subunit; part of the 5S rRNA/L5/L18/L25 subcomplex. Contacts the 5S rRNA. Binds to the 5S rRNA independently of L5 and L18.

In terms of biological role, this is one of the proteins that binds to the 5S RNA in the ribosome where it forms part of the central protuberance. In Chlorobaculum parvum (strain DSM 263 / NCIMB 8327) (Chlorobium vibrioforme subsp. thiosulfatophilum), this protein is Large ribosomal subunit protein bL25.